The chain runs to 374 residues: CC-adding tRNA nucleotidyltransferase (374 aa).

39–42 (GAVR) lines the CTP pocket. Mg(2+)-binding residues include Asp52 and Asp54. CTP-binding positions include 126–127 (RD), Asn131, 171–180 (DASRLVRAAR), and Arg209.

The protein belongs to the tRNA nucleotidyltransferase/poly(A) polymerase family. The cofactor is Mg(2+).

The enzyme catalyses a tRNA precursor + 2 CTP = a tRNA with a 3' CC end + 2 diphosphate. Its function is as follows. tRNA nucleotidyltransferase involved in the synthesis of the tRNA CCA terminus. Adds the two cytidine residues to tRNA. This is CC-adding tRNA nucleotidyltransferase from Deinococcus radiodurans (strain ATCC 13939 / DSM 20539 / JCM 16871 / CCUG 27074 / LMG 4051 / NBRC 15346 / NCIMB 9279 / VKM B-1422 / R1).